We begin with the raw amino-acid sequence, 72 residues long: Conotoxin Ep11.1 (72 aa).

Positions 1–19 are cleaved as a signal peptide; it reads MKLCVTFLLILVILPSVTG. Positions 20 to 32 are excised as a propeptide; that stretch reads EKSSKRTLSGAAL. Intrachain disulfides connect Cys-39/Cys-53, Cys-46/Cys-58, Cys-52/Cys-63, and Cys-57/Cys-70.

The protein belongs to the conotoxin I1 superfamily. In terms of tissue distribution, expressed by the venom duct.

Its subcellular location is the secreted. The sequence is that of Conotoxin Ep11.1 from Conus episcopatus (Bishop's cone).